Reading from the N-terminus, the 555-residue chain is Glutamine--tRNA ligase (555 aa).

A 'HIGH' region motif is present at residues 34–44; sequence PEPNGYLHIGH. ATP contacts are provided by residues 35-37 and 41-47; these read EPN and HIGHAKS. L-glutamine is bound by residues D67 and Y212. ATP contacts are provided by residues T231, 261–262, and 269–271; these read RL and MSK. The short motif at 268 to 272 is the 'KMSKS' region element; the sequence is IMSKR.

This sequence belongs to the class-I aminoacyl-tRNA synthetase family. Monomer.

Its subcellular location is the cytoplasm. It catalyses the reaction tRNA(Gln) + L-glutamine + ATP = L-glutaminyl-tRNA(Gln) + AMP + diphosphate. This chain is Glutamine--tRNA ligase, found in Yersinia pseudotuberculosis serotype O:3 (strain YPIII).